Reading from the N-terminus, the 794-residue chain is DNA ligase (794 aa).

NAD(+)-binding positions include 35 to 39 (DAEYD), 84 to 85 (SL), and Glu126. Lys128 serves as the catalytic N6-AMP-lysine intermediate. Residues Arg149, Glu186, Lys302, and Lys326 each coordinate NAD(+). The Zn(2+) site is built by Cys420, Cys423, Cys450, and Cys456. Residues 711–794 (VEGLPLAGQT…KLFDEHGVAR (84 aa)) enclose the BRCT domain.

Belongs to the NAD-dependent DNA ligase family. LigA subfamily. It depends on Mg(2+) as a cofactor. Requires Mn(2+) as cofactor.

It catalyses the reaction NAD(+) + (deoxyribonucleotide)n-3'-hydroxyl + 5'-phospho-(deoxyribonucleotide)m = (deoxyribonucleotide)n+m + AMP + beta-nicotinamide D-nucleotide.. Its function is as follows. DNA ligase that catalyzes the formation of phosphodiester linkages between 5'-phosphoryl and 3'-hydroxyl groups in double-stranded DNA using NAD as a coenzyme and as the energy source for the reaction. It is essential for DNA replication and repair of damaged DNA. In Pseudomonas aeruginosa (strain UCBPP-PA14), this protein is DNA ligase.